The following is a 148-amino-acid chain: Nucleoside diphosphate kinase 1 (148 aa).

Residues Lys9, Phe57, Arg85, Thr91, Arg102, and Asn112 each coordinate ATP. The active-site Pros-phosphohistidine intermediate is His115.

The protein belongs to the NDK family. The cofactor is Mg(2+). Post-translationally, the N-terminus is blocked.

It catalyses the reaction a 2'-deoxyribonucleoside 5'-diphosphate + ATP = a 2'-deoxyribonucleoside 5'-triphosphate + ADP. The catalysed reaction is a ribonucleoside 5'-diphosphate + ATP = a ribonucleoside 5'-triphosphate + ADP. Functionally, major role in the synthesis of nucleoside triphosphates other than ATP. The ATP gamma phosphate is transferred to the NDP beta phosphate via a ping-pong mechanism, using a phosphorylated active-site intermediate. The chain is Nucleoside diphosphate kinase 1 (NDPK1) from Spinacia oleracea (Spinach).